The primary structure comprises 347 residues: Dihydroorotate dehydrogenase (quinone) (347 aa).

Residues 62–66 (AGLDK) and T86 each bind FMN. K66 contacts substrate. 111–115 (NRMGF) contacts substrate. N142 and N175 together coordinate FMN. A substrate-binding site is contributed by N175. The active-site Nucleophile is S178. Position 180 (N180) interacts with substrate. FMN-binding residues include K220 and T248. 249-250 (NT) contacts substrate. FMN contacts are provided by residues G271, G300, and 321–322 (YS).

It belongs to the dihydroorotate dehydrogenase family. Type 2 subfamily. As to quaternary structure, monomer. It depends on FMN as a cofactor.

The protein localises to the cell membrane. It catalyses the reaction (S)-dihydroorotate + a quinone = orotate + a quinol. The protein operates within pyrimidine metabolism; UMP biosynthesis via de novo pathway; orotate from (S)-dihydroorotate (quinone route): step 1/1. Catalyzes the conversion of dihydroorotate to orotate with quinone as electron acceptor. In Dechloromonas aromatica (strain RCB), this protein is Dihydroorotate dehydrogenase (quinone).